The primary structure comprises 171 residues: ATP synthase subunit b (171 aa).

Residues 2 to 22 (FVVKMVLGFLILLSPLCATGL) form a helical membrane-spanning segment.

Belongs to the ATPase B chain family. In terms of assembly, F-type ATPases have 2 components, F(1) - the catalytic core - and F(0) - the membrane proton channel. F(1) has five subunits: alpha(3), beta(3), gamma(1), delta(1), epsilon(1). F(0) has three main subunits: a(1), b(2) and c(10-14). The alpha and beta chains form an alternating ring which encloses part of the gamma chain. F(1) is attached to F(0) by a central stalk formed by the gamma and epsilon chains, while a peripheral stalk is formed by the delta and b chains.

The protein resides in the cell inner membrane. Functionally, f(1)F(0) ATP synthase produces ATP from ADP in the presence of a proton or sodium gradient. F-type ATPases consist of two structural domains, F(1) containing the extramembraneous catalytic core and F(0) containing the membrane proton channel, linked together by a central stalk and a peripheral stalk. During catalysis, ATP synthesis in the catalytic domain of F(1) is coupled via a rotary mechanism of the central stalk subunits to proton translocation. Component of the F(0) channel, it forms part of the peripheral stalk, linking F(1) to F(0). The sequence is that of ATP synthase subunit b from Helicobacter pylori (strain J99 / ATCC 700824) (Campylobacter pylori J99).